Reading from the N-terminus, the 254-residue chain is MAESGVPVLGFFIIAVLMSAQESWAIKEEHVIIQAEFYLNPDQSGEFMFDFDGDEIFHVDMAKKETVWRLEEFGRFASFEAQGALANIAVDKANLEIMTKRSNNTPITNVPPEVTVLTNSPVELGEPNVLICFIDKFSPPVVKVTWLKNGKPVTTGVSETVFLPREDHLFRKFHYLPFLPSTEDIYDCKVEHWCLDAPLLKHWEFDAPSPLPETTENVVCALGLIVGLVGIIVGTVFIIKGVRKSNAAERRGPL.

Positions 1–25 (MAESGVPVLGFFIIAVLMSAQESWA) are cleaved as a signal peptide. Residues 26–109 (IKEEHVIIQA…KRSNNTPITN (84 aa)) form an alpha-1 region. At 26 to 216 (IKEEHVIIQA…APSPLPETTE (191 aa)) the chain is on the extracellular side. Residue Asn-103 is glycosylated (N-linked (GlcNAc...) asparagine). Residues 110-203 (VPPEVTVLTN…CLDAPLLKHW (94 aa)) are alpha-2. The Ig-like C1-type domain maps to 112 to 204 (PEVTVLTNSP…LDAPLLKHWE (93 aa)). Cys-132 and Cys-188 form a disulfide bridge. Residues 204–216 (EFDAPSPLPETTE) form a connecting peptide region. A helical transmembrane segment spans residues 217-239 (NVVCALGLIVGLVGIIVGTVFII). Residues 240 to 254 (KGVRKSNAAERRGPL) lie on the Cytoplasmic side of the membrane. A Glycyl lysine isopeptide (Lys-Gly) (interchain with G-Cter in ubiquitin) cross-link involves residue Lys-244.

This sequence belongs to the MHC class II family. As to quaternary structure, heterodimer of an alpha chain and a beta chain.

The protein localises to the membrane. This Macaca mulatta (Rhesus macaque) protein is Mamu class II histocompatibility antigen, DR alpha chain (Mamu-DRA).